Here is a 130-residue protein sequence, read N- to C-terminus: Glycine cleavage system H protein (130 aa).

In terms of domain architecture, Lipoyl-binding spans 24–106; the sequence is SVTVGITEHA…YGDGWIMRIQ (83 aa). Lysine 65 bears the N6-lipoyllysine mark.

The protein belongs to the GcvH family. As to quaternary structure, the glycine cleavage system is composed of four proteins: P, T, L and H. It depends on (R)-lipoate as a cofactor.

The glycine cleavage system catalyzes the degradation of glycine. The H protein shuttles the methylamine group of glycine from the P protein to the T protein. This is Glycine cleavage system H protein from Halorhodospira halophila (strain DSM 244 / SL1) (Ectothiorhodospira halophila (strain DSM 244 / SL1)).